The primary structure comprises 355 residues: Vi polysaccharide export protein VexA/TviF (355 aa).

An N-terminal signal peptide occupies residues 1-16; it reads MKKIIILLTTFFLLSG. Cysteine 17 is lipidated: N-palmitoyl cysteine. Residue cysteine 17 is the site of S-diacylglycerol cysteine attachment.

Belongs to the BexD/CtrA/VexA family.

It is found in the cell outer membrane. Functionally, may form an ATP-driven capsule polysaccharide export apparatus, in association with the VexB, VexC and VexD proteins. May function as a membrane anchor for the polysaccharide. Possible porin properties. This chain is Vi polysaccharide export protein VexA/TviF (vexA), found in Salmonella typhi.